A 416-amino-acid polypeptide reads, in one-letter code: Isobutyryl-CoA dehydrogenase, mitochondrial (416 aa).

The transit peptide at 1-21 directs the protein to the mitochondrion; it reads MISGLFKLSNKQSVLQNATKL. Residues 156–165 and 189–191 contribute to the FAD site; these read YCLTEPGSGS and FIS. Serine 165 lines the substrate pocket. 273 to 276 contacts substrate; that stretch reads NGGR. FAD-binding positions include arginine 301, 311–312, and 370–374; these read FQ and QLFGG. Glutamate 397 acts as the Proton acceptor in catalysis. Position 399–401 (399–401) interacts with FAD; it reads SDA. Arginine 409 is a substrate binding site.

The protein belongs to the acyl-CoA dehydrogenase family. In terms of assembly, homotetramer. The cofactor is FAD.

It is found in the mitochondrion. It catalyses the reaction 2-methylpropanoyl-CoA + oxidized [electron-transfer flavoprotein] + H(+) = 2-methylpropenoyl-CoA + reduced [electron-transfer flavoprotein]. The enzyme catalyses (2S)-2-methylbutanoyl-CoA + oxidized [electron-transfer flavoprotein] + H(+) = (2E)-2-methylbut-2-enoyl-CoA + reduced [electron-transfer flavoprotein]. The catalysed reaction is propanoyl-CoA + oxidized [electron-transfer flavoprotein] + H(+) = acryloyl-CoA + reduced [electron-transfer flavoprotein]. The protein operates within amino-acid degradation; L-valine degradation. In terms of biological role, isobutyryl-CoA dehydrogenase which catalyzes one of the steps of the valine catabolic pathway. To a lesser extent, is also able to catalyze the oxidation of (2S)-2-methylbutanoyl-CoA. This Dictyostelium discoideum (Social amoeba) protein is Isobutyryl-CoA dehydrogenase, mitochondrial (acad8).